Here is a 253-residue protein sequence, read N- to C-terminus: Ribonuclease HII (253 aa).

Positions 70-253 constitute an RNase H type-2 domain; it reads DLIAGVDEVG…KTFAPIKDIL (184 aa). Asp-76, Glu-77, and Asp-168 together coordinate a divalent metal cation.

Belongs to the RNase HII family. Mn(2+) serves as cofactor. The cofactor is Mg(2+).

It localises to the cytoplasm. The enzyme catalyses Endonucleolytic cleavage to 5'-phosphomonoester.. Functionally, endonuclease that specifically degrades the RNA of RNA-DNA hybrids. The polypeptide is Ribonuclease HII (Leuconostoc mesenteroides subsp. mesenteroides (strain ATCC 8293 / DSM 20343 / BCRC 11652 / CCM 1803 / JCM 6124 / NCDO 523 / NBRC 100496 / NCIMB 8023 / NCTC 12954 / NRRL B-1118 / 37Y)).